The following is a 293-amino-acid chain: Undecaprenyl-diphosphatase (293 aa).

Transmembrane regions (helical) follow at residues 3–23, 43–63, 85–105, 109–129, 178–198, 203–223, 238–258, and 269–289; these read IALALKAVILGIVEGLTEFLP, KGKIFEIVIQFGAILAVCWEF, VNVIVATIPAIVLALVFGKWI, LFNPITVATAFIIGGVVILLA, FALVPGTSRSGATIIGGMLFG, VATEFSFFLAIPVIFGATVYE, IFAVGFVFAFLSAFLCVRWLL, and FAWYRIAFGIIVLLTAWTGVI.

The protein belongs to the UppP family.

It is found in the cell inner membrane. It carries out the reaction di-trans,octa-cis-undecaprenyl diphosphate + H2O = di-trans,octa-cis-undecaprenyl phosphate + phosphate + H(+). Catalyzes the dephosphorylation of undecaprenyl diphosphate (UPP). Confers resistance to bacitracin. This chain is Undecaprenyl-diphosphatase, found in Cupriavidus metallidurans (strain ATCC 43123 / DSM 2839 / NBRC 102507 / CH34) (Ralstonia metallidurans).